The primary structure comprises 737 residues: Glycogen [starch] synthase, muscle (737 aa).

Ser-8 carries the phosphoserine; by AMPK and PKA modification. Residue Ser-11 is modified to Phosphoserine. Lys-39 is a UDP binding site. 2 residues coordinate UDP-alpha-D-glucose: His-205 and Arg-211. Alpha-D-glucose 6-phosphate-binding residues include His-291, Glu-292, Gln-294, His-297, and Lys-301. A UDP-binding site is contributed by Arg-331. Residue Arg-331 coordinates UDP-alpha-D-glucose. Ser-412 carries the phosphoserine modification. Alpha-D-glucose 6-phosphate is bound at residue His-501. The UDP-alpha-D-glucose site is built by Glu-510, Trp-512, and Gly-513. Thr-515 is a binding site for UDP. Alpha-D-glucose 6-phosphate-binding residues include Arg-582 and Arg-586. Residues 634 to 737 form a disordered region; it reads YRYPRPASVP…PTSSLGEERN (104 aa). Ser-641 bears the Phosphoserine; by DYRK2, GSK3-alpha, GSK3-beta and PASK mark. Phosphoserine; by GSK3-alpha and GSK3-beta is present on residues Ser-645 and Ser-649. Ser-652 bears the Phosphoserine mark. Ser-653 is modified (phosphoserine; by GSK3-alpha and GSK3-beta). At Ser-657 the chain carries Phosphoserine; by CK2. Residues 658-681 are compositionally biased toward acidic residues; that stretch reads EDEEDPRNGPLEEDGERYDEDEEA. Residues 682–695 are compositionally biased toward basic and acidic residues; that stretch reads AKDRRNIRAPEWPR. The residue at position 698 (Ser-698) is a Phosphoserine. Residues 698–714 are compositionally biased toward polar residues; sequence SCTSSTSGSKRNSVDTA. Phosphothreonine is present on Thr-700. A Phosphoserine modification is found at Ser-710. Residues 715–737 are compositionally biased toward low complexity; it reads TSSSLSTPSEPLSPTSSLGEERN. Thr-721 is subject to Phosphothreonine. A phosphoserine mark is found at Ser-727 and Ser-731.

It belongs to the glycosyltransferase 3 family. In terms of assembly, part of the GYS1-GYG1 complex, a heterooctamer composed of a tetramer of GYS1 and 2 dimers of GYG1, where each GYS1 protomer binds to one GYG1 subunit (via GYG1 C-terminus); the GYS1 tetramer may dissociate from GYG1 dimers to continue glycogen polymerization on its own. Phosphorylation at Ser-8 by AMPK inactivates the enzyme activity. Primed phosphorylation at Ser-657 (site 5) by CSNK2A1 and CSNK2A2 is required for inhibitory phosphorylation at Ser-641 (site 3a), Ser-645 (site 3b), Ser-649 (site 3c) and Ser-653 (site 4) by GSK3A an GSK3B. Phosphorylated at Ser-641 by PASK, leading to inactivation; phosphorylation by PASK is inhibited by glycogen. Phosphorylated at Ser-641 by DYRK2, leading to inactivation. Dephosphorylation at Ser-641 and Ser-645 by PP1 activates the enzyme.

The enzyme catalyses [(1-&gt;4)-alpha-D-glucosyl](n) + UDP-alpha-D-glucose = [(1-&gt;4)-alpha-D-glucosyl](n+1) + UDP + H(+). The protein operates within glycan biosynthesis; glycogen biosynthesis. Its activity is regulated as follows. Allosteric activation by glucose-6-phosphate. Phosphorylation reduces the activity towards UDP-glucose. When in the non-phosphorylated state, glycogen synthase does not require glucose-6-phosphate as an allosteric activator; when phosphorylated it does. Glycogen synthase participates in the glycogen biosynthetic process along with glycogenin and glycogen branching enzyme. Extends the primer composed of a few glucose units formed by glycogenin by adding new glucose units to it. In this context, glycogen synthase transfers the glycosyl residue from UDP-Glc to the non-reducing end of alpha-1,4-glucan. The protein is Glycogen [starch] synthase, muscle (GYS1) of Pongo abelii (Sumatran orangutan).